A 98-amino-acid chain; its full sequence is Large ribosomal subunit protein bL28 (98 aa).

As to quaternary structure, part of the 50S ribosomal subunit.

The sequence is that of Large ribosomal subunit protein bL28 (rpmB) from Thermus thermophilus (strain ATCC 27634 / DSM 579 / HB8).